A 1139-amino-acid polypeptide reads, in one-letter code: Integrin alpha ina-1 (1139 aa).

An N-terminal signal peptide occupies residues 1–19 (MRECIISWTLLLCLSCVKS). The Extracellular segment spans residues 20-1084 (FNLDVNAPIY…PTIGDSRPIP (1065 aa)). An FG-GAP 1 repeat occupies 21-85 (NLDVNAPIYR…CDINTFYNGG (65 aa)). 2 N-linked (GlcNAc...) asparagine glycosylation sites follow: asparagine 108 and asparagine 136. FG-GAP repeat units lie at residues 111 to 171 (RGRT…LQST), 180 to 231 (LPTT…IFDS), 242 to 302 (NGDM…SSSK), 307 to 370 (EDKF…QRKQ), 378 to 438 (HPPK…IEKF), and 448 to 510 (GNDL…MEKR). An N-linked (GlcNAc...) asparagine glycan is attached at asparagine 313. Asparagine 580, asparagine 788, asparagine 851, and asparagine 1026 each carry an N-linked (GlcNAc...) asparagine glycan. A helical transmembrane segment spans residues 1085–1106 (WWIYVIAAVIGVLILSLIIICL). Over 1107–1139 (SKCGFFKRNRLDQPSLYTAQLKHEREEWADTGL) the chain is Cytoplasmic.

It belongs to the integrin alpha chain family. As to quaternary structure, heterodimer of an alpha and a beta subunit. Alpha ina-1 associates with beta pat-3. Interacts (via cytoplasmic domain) with src-1 (when phosphorylated at 'Tyr-416').

The protein resides in the membrane. It is found in the cell projection. It localises to the phagocytic cup. The protein localises to the cytoplasmic vesicle. Its subcellular location is the phagosome membrane. Functionally, plays a role in cell migration, axon fasciculation, and morphogenesis. During gonad morphogenesis, involved in distal tip cell (DTC)-mediated guidance of gonad elongation, in maintaining their sharp tapering morphology and in their migration. Involved in the anterior-posterior positioning of QR neuroblast descendants by regulating the migratory speed of QR.p. Probably by acting as a receptor for apoptotic cells, plays a role in the clearance of apoptotic cells during mid-embryogenesis. This chain is Integrin alpha ina-1 (ina-1), found in Caenorhabditis elegans.